The following is a 424-amino-acid chain: Serine--tRNA ligase (424 aa).

Basic and acidic residues predominate over residues 1-15; sequence MIDPKLLRTDPDAVR. Residues 1-27 form a disordered region; that stretch reads MIDPKLLRTDPDAVRRSQAARGEDSSV. 230–232 provides a ligand contact to L-serine; it reads TSE. Residues 261–263 and V277 contribute to the ATP site; that span reads RRE. Residue E284 coordinates L-serine. ATP is bound at residue 348–351; that stretch reads EITS. T382 lines the L-serine pocket.

This sequence belongs to the class-II aminoacyl-tRNA synthetase family. Type-1 seryl-tRNA synthetase subfamily. As to quaternary structure, homodimer. The tRNA molecule binds across the dimer.

It localises to the cytoplasm. It carries out the reaction tRNA(Ser) + L-serine + ATP = L-seryl-tRNA(Ser) + AMP + diphosphate + H(+). It catalyses the reaction tRNA(Sec) + L-serine + ATP = L-seryl-tRNA(Sec) + AMP + diphosphate + H(+). It participates in aminoacyl-tRNA biosynthesis; selenocysteinyl-tRNA(Sec) biosynthesis; L-seryl-tRNA(Sec) from L-serine and tRNA(Sec): step 1/1. Catalyzes the attachment of serine to tRNA(Ser). Is also able to aminoacylate tRNA(Sec) with serine, to form the misacylated tRNA L-seryl-tRNA(Sec), which will be further converted into selenocysteinyl-tRNA(Sec). The protein is Serine--tRNA ligase of Cutibacterium acnes (strain DSM 16379 / KPA171202) (Propionibacterium acnes).